We begin with the raw amino-acid sequence, 224 residues long: Heme response regulator HssR (224 aa).

One can recognise a Response regulatory domain in the interval Asn-3 to Leu-116. Asp-52 is modified (4-aspartylphosphate). Positions Asp-124–Gln-222 form a DNA-binding region, ompR/PhoB-type.

Phosphorylated by HssS.

Its subcellular location is the cytoplasm. In terms of biological role, member of the two-component regulatory system HssS/HssR involved in intracellular heme homeostasis and tempering of staphylococcal virulence. Phosphorylated HssR binds to a direct repeat sequence within hrtAB promoter and activates the expression of hrtAB, an efflux pump, in response to extracellular heme, hemin, hemoglobin or blood. The sequence is that of Heme response regulator HssR (hssR) from Staphylococcus epidermidis (strain ATCC 35984 / DSM 28319 / BCRC 17069 / CCUG 31568 / BM 3577 / RP62A).